The primary structure comprises 302 residues: Calpain-1 catalytic subunit (302 aa).

The interval 1 to 114 (RESGCSFVLA…KRAGTQELDD (114 aa)) is domain III. The interval 115–130 (QIQANLPDEQVLSAEE) is linker. The tract at residues 131–301 (IDENFKALFR…LFKWLQLTMF (171 aa)) is domain IV. 3 consecutive EF-hand domains span residues 173-206 (FSME…NRIR), 203-238 (NRIR…AGFK), and 268-302 (VRLE…TMFA). Residues Asp186, Asp188, Asn190, Lys192, Glu197, Asp216, Asp218, Ser220, Ser222, and Glu227 each contribute to the Ca(2+) site.

The protein belongs to the peptidase C2 family. In terms of assembly, forms a heterodimer with a small (regulatory) subunit CAPNS1. Ca(2+) is required as a cofactor. In terms of processing, the N-terminus is blocked. Post-translationally, undergoes calcium-induced successive autoproteolytic cleavages that generate a membrane-bound 78 kDa active form and an intracellular 75 kDa active form. Calpastatin reduces with high efficiency the transition from 78 kDa to 75 kDa calpain forms. In terms of tissue distribution, ubiquitous.

The protein resides in the cytoplasm. It localises to the cell membrane. It catalyses the reaction Broad endopeptidase specificity.. With respect to regulation, activated by micromolar concentrations of calcium and inhibited by calpastatin. Its function is as follows. Calcium-regulated non-lysosomal thiol-protease which catalyzes limited proteolysis of substrates involved in cytoskeletal remodeling and signal transduction. Proteolytically cleaves CTBP1. Cleaves and activates caspase-7 (CASP7). The chain is Calpain-1 catalytic subunit from Oryctolagus cuniculus (Rabbit).